Here is a 506-residue protein sequence, read N- to C-terminus: NAD(P)H-quinone oxidoreductase chain 4, chloroplastic (506 aa).

14 consecutive transmembrane segments (helical) span residues 5-25 (FPLL…IPFL), 35-55 (WYTL…FIYK), 88-108 (MPLI…AWPI), 114-134 (LFYF…LSQD), 135-155 (ILLF…LLSL), 168-188 (FILY…TMAF), 209-229 (ALEI…LPAF), 243-263 (HYST…YGLI), 275-295 (VIFS…GALT), 309-329 (SSIS…DLGL), 331-351 (GAMM…FLAG), 386-406 (SLAL…LGFL), 415-435 (FIAL…IYLL), and 463-483 (IFIM…PNLT).

It belongs to the complex I subunit 4 family.

It is found in the plastid. It localises to the chloroplast thylakoid membrane. The enzyme catalyses a plastoquinone + NADH + (n+1) H(+)(in) = a plastoquinol + NAD(+) + n H(+)(out). The catalysed reaction is a plastoquinone + NADPH + (n+1) H(+)(in) = a plastoquinol + NADP(+) + n H(+)(out). This Chaetosphaeridium globosum (Charophycean green alga) protein is NAD(P)H-quinone oxidoreductase chain 4, chloroplastic.